The following is a 1575-amino-acid chain: Laminin subunit gamma-3 (1575 aa).

A signal peptide spans 1–19 (MAAAALLLGLALLAPRAAG). One can recognise a Laminin N-terminal domain in the interval 31-270 (RPQRCLPVFE…AVSDFSVGGR (240 aa)). N-linked (GlcNAc...) asparagine glycosylation is found at asparagine 87 and asparagine 119. 16 disulfides stabilise this stretch: cysteine 271-cysteine 280, cysteine 273-cysteine 290, cysteine 292-cysteine 301, cysteine 304-cysteine 324, cysteine 327-cysteine 336, cysteine 329-cysteine 352, cysteine 355-cysteine 364, cysteine 367-cysteine 380, cysteine 383-cysteine 395, cysteine 385-cysteine 401, cysteine 403-cysteine 412, cysteine 415-cysteine 427, cysteine 430-cysteine 441, cysteine 432-cysteine 448, cysteine 450-cysteine 459, and cysteine 462-cysteine 477. 4 Laminin EGF-like domains span residues 271 to 326 (CKCN…ECLP), 327 to 382 (CNCS…PCQP), 383 to 429 (CDCQ…GCRP), and 430 to 479 (CTCN…GCSS). The N-linked (GlcNAc...) asparagine glycan is linked to asparagine 295. The N-linked (GlcNAc...) asparagine glycan is linked to asparagine 328. Residues 480–489 (CFCYGHSKVC) form the Laminin EGF-like 5; first part domain. The Laminin IV type A domain occupies 499 to 672 (HILSDFHQGA…LSPPASWVEI (174 aa)). Asparagine 631 carries N-linked (GlcNAc...) asparagine glycosylation. A Laminin EGF-like 5; second part domain is found at 673-706 (CSCPTGYTGQFCESCAPGYKREMPQGGPYASCVP). Intrachain disulfides connect cysteine 707/cysteine 715, cysteine 709/cysteine 722, cysteine 724/cysteine 733, cysteine 736/cysteine 752, cysteine 755/cysteine 763, cysteine 757/cysteine 774, cysteine 777/cysteine 786, cysteine 789/cysteine 807, cysteine 810/cysteine 824, cysteine 812/cysteine 831, cysteine 834/cysteine 843, cysteine 846/cysteine 863, cysteine 866/cysteine 880, cysteine 868/cysteine 887, cysteine 889/cysteine 898, cysteine 901/cysteine 914, cysteine 917/cysteine 929, cysteine 919/cysteine 936, cysteine 938/cysteine 947, cysteine 950/cysteine 962, cysteine 965/cysteine 977, cysteine 967/cysteine 983, cysteine 985/cysteine 994, and cysteine 997/cysteine 1010. Laminin EGF-like domains are found at residues 707–754 (CTCN…DCQP), 755–809 (CPCP…PCHQ), 810–865 (CQCS…KCMP), 866–916 (CSCH…GCRS), 917–964 (CKCH…GCRA), and 965–1013 (CRCS…CQQC). The N-linked (GlcNAc...) asparagine glycan is linked to asparagine 837. Asparagine 980 carries N-linked (GlcNAc...) asparagine glycosylation. Positions 1014-1575 (PSCYALVKEE…SLPENCASWQ (562 aa)) are domain II and I. The Cell attachment site signature appears at 1059–1061 (RGD). The stretch at 1073–1134 (REAFLEQMMS…SEEEILHAAA (62 aa)) forms a coiled coil. A glycan (N-linked (GlcNAc...) asparagine) is linked at asparagine 1185. Residues 1201–1228 (LETQRDLEDRYQEVQAAQKALRTAVAEV) adopt a coiled-coil conformation. A disordered region spans residues 1378 to 1399 (KQAERMLGNAAPLSSSAKKKGR). 2 coiled-coil regions span residues 1410-1492 (KLAK…LARL) and 1523-1567 (GSLQ…LHSL).

In terms of assembly, laminin is a complex glycoprotein, consisting of three different polypeptide chains (alpha, beta, gamma), which are bound to each other by disulfide bonds into a cross-shaped molecule comprising one long and three short arms with globules at each end. Gamma-3 is a subunit of laminin-12 (laminin-213), laminin-14 (laminin-423) and laminin-15 (laminin-523). As to expression, broadly expressed in: skin, heart, lung, and the reproductive tracts.

Its subcellular location is the secreted. It localises to the extracellular space. The protein resides in the extracellular matrix. The protein localises to the basement membrane. Its function is as follows. Binding to cells via a high affinity receptor, laminin is thought to mediate the attachment, migration and organization of cells into tissues during embryonic development by interacting with other extracellular matrix components. This Homo sapiens (Human) protein is Laminin subunit gamma-3 (LAMC3).